A 429-amino-acid chain; its full sequence is Histidinol dehydrogenase (429 aa).

NAD(+)-binding residues include tyrosine 127, glutamine 188, and asparagine 211. Residues serine 234, glutamine 256, and histidine 259 each contribute to the substrate site. Positions 256 and 259 each coordinate Zn(2+). Active-site proton acceptor residues include glutamate 324 and histidine 325. 4 residues coordinate substrate: histidine 325, aspartate 358, glutamate 412, and histidine 417. Residue aspartate 358 coordinates Zn(2+). Residue histidine 417 coordinates Zn(2+).

This sequence belongs to the histidinol dehydrogenase family. Zn(2+) serves as cofactor.

It carries out the reaction L-histidinol + 2 NAD(+) + H2O = L-histidine + 2 NADH + 3 H(+). It participates in amino-acid biosynthesis; L-histidine biosynthesis; L-histidine from 5-phospho-alpha-D-ribose 1-diphosphate: step 9/9. Its function is as follows. Catalyzes the sequential NAD-dependent oxidations of L-histidinol to L-histidinaldehyde and then to L-histidine. The polypeptide is Histidinol dehydrogenase (Bacillus cereus (strain ATCC 14579 / DSM 31 / CCUG 7414 / JCM 2152 / NBRC 15305 / NCIMB 9373 / NCTC 2599 / NRRL B-3711)).